We begin with the raw amino-acid sequence, 195 residues long: MRNDDDQEEKKTELPLGKETEANLFKSRSIFIYGTITQELAQKVCSQLVALAAASDDDIRLFVNSPGGHVESGDSIHDMIKFVKPKVWTIGTGWVASAGALIYVAAPKEQRLCLPNTRFLLHQPSGGTRGMASDIEIQAREIIKMNERLNRIFSEATGQPVDKIAKDTDRDYWLGAEEAKAYGLVSRIVTSIAEI.

Ser97 acts as the Nucleophile in catalysis. The active site involves His122.

It belongs to the peptidase S14 family. In terms of assembly, fourteen ClpP subunits assemble into 2 heptameric rings which stack back to back to give a disk-like structure with a central cavity, resembling the structure of eukaryotic proteasomes.

Its subcellular location is the cytoplasm. The catalysed reaction is Hydrolysis of proteins to small peptides in the presence of ATP and magnesium. alpha-casein is the usual test substrate. In the absence of ATP, only oligopeptides shorter than five residues are hydrolyzed (such as succinyl-Leu-Tyr-|-NHMec, and Leu-Tyr-Leu-|-Tyr-Trp, in which cleavage of the -Tyr-|-Leu- and -Tyr-|-Trp bonds also occurs).. Cleaves peptides in various proteins in a process that requires ATP hydrolysis. Has a chymotrypsin-like activity. Plays a major role in the degradation of misfolded proteins. This Rhizobium meliloti (strain 1021) (Ensifer meliloti) protein is ATP-dependent Clp protease proteolytic subunit 3.